Here is a 641-residue protein sequence, read N- to C-terminus: Serine/threonine-protein kinase PK-1 (641 aa).

In terms of domain architecture, Protein kinase spans 18-280 (YRVDARIAVG…ARARDARARL (263 aa)). ATP contacts are provided by residues 24–32 (IAVGGMATV) and Lys47. Asp141 functions as the Proton acceptor in the catalytic mechanism. The tract at residues 317-347 (LPVNEEDEGADAAHRTSRFRSPPPLPPRGRT) is disordered. PASTA domains lie at 375-441 (SGQF…TLSK), 442-508 (GPRT…LTVS), 509-576 (KGAP…TLSK), and 577-641 (GPEM…IEIR). Positions 469–494 (KPGMSTREFSDSVPAGSVISTEPGKG) are disordered.

This sequence belongs to the protein kinase superfamily. Ser/Thr protein kinase family. Autophosphorylated on threonine residue(s).

The catalysed reaction is L-seryl-[protein] + ATP = O-phospho-L-seryl-[protein] + ADP + H(+). It carries out the reaction L-threonyl-[protein] + ATP = O-phospho-L-threonyl-[protein] + ADP + H(+). This Streptomyces toyocaensis protein is Serine/threonine-protein kinase PK-1 (spk1).